A 237-amino-acid polypeptide reads, in one-letter code: Large ribosomal subunit protein uL2 (237 aa).

Over residues 1-11 (MGKRIISQNRG) the composition is skewed to polar residues. 2 disordered regions span residues 1-20 (MGKR…YRAP) and 201-237 (FGGG…GVRR).

Belongs to the universal ribosomal protein uL2 family. Part of the 50S ribosomal subunit. Forms a bridge to the 30S subunit in the 70S ribosome.

In terms of biological role, one of the primary rRNA binding proteins. Required for association of the 30S and 50S subunits to form the 70S ribosome, for tRNA binding and peptide bond formation. It has been suggested to have peptidyltransferase activity; this is somewhat controversial. Makes several contacts with the 16S rRNA in the 70S ribosome. The chain is Large ribosomal subunit protein uL2 from Archaeoglobus fulgidus (strain ATCC 49558 / DSM 4304 / JCM 9628 / NBRC 100126 / VC-16).